Here is a 165-residue protein sequence, read N- to C-terminus: Sorting nexin-12 (165 aa).

Positions 1-20 (MSDTAVADTRRLNSKPQDLT) are disordered. At Ser-2 the chain carries N-acetylserine. The residue at position 23 (Tyr-23) is a Phosphotyrosine. In terms of domain architecture, PX spans 28–151 (NFLEIDIFNP…HMFLQEEAID (124 aa)). Residues Arg-71, Ser-73, Lys-96, and Arg-118 each coordinate a 1,2-diacyl-sn-glycero-3-phospho-(1D-myo-inositol-3-phosphate). A Phosphoserine modification is found at Ser-73.

It belongs to the sorting nexin family.

It is found in the membrane. Its function is as follows. May be involved in several stages of intracellular trafficking. The sequence is that of Sorting nexin-12 (Snx12) from Mus musculus (Mouse).